The primary structure comprises 104 residues: Small ribosomal subunit protein uS10 (104 aa).

It belongs to the universal ribosomal protein uS10 family. Part of the 30S ribosomal subunit.

In terms of biological role, involved in the binding of tRNA to the ribosomes. The sequence is that of Small ribosomal subunit protein uS10 from Alkaliphilus oremlandii (strain OhILAs) (Clostridium oremlandii (strain OhILAs)).